The following is a 125-amino-acid chain: Sulfiredoxin, chloroplastic/mitochondrial (125 aa).

Residues 1 to 22 constitute a chloroplast and mitochondrion transit peptide; sequence MANLMMRLPISLRSFSVSASSS.

Belongs to the sulfiredoxin family. As to expression, low expression in photosynthetic tissues such as leaves and sepals.

Its subcellular location is the plastid. The protein resides in the chloroplast. The protein localises to the mitochondrion. It carries out the reaction S-hydroxy-S-oxy-L-cysteinyl-[peroxiredoxin] + [protein]-dithiol + ATP = S-hydroxy-L-cysteinyl-[peroxiredoxin] + [protein]-disulfide + ADP + phosphate. Its function is as follows. Contributes to oxidative stress resistance by reducing cysteine-sulfinic acid formed under exposure to oxidants in a peroxiredoxin. May catalyze the reduction in a multi-step process by acting both as a specific phosphotransferase and a thioltransferase. Required to switch on the antioxidant pathway to regenerate the oxidative damage. In mitochondrion, catalyzes the retroreduction of the inactive sulfinic form of atypical Prx IIF using thioredoxin as reducing agent. The protein is Sulfiredoxin, chloroplastic/mitochondrial (SRX) of Arabidopsis thaliana (Mouse-ear cress).